Consider the following 1430-residue polypeptide: rRNA biogenesis protein RRP5 (1430 aa).

6 S1 motif domains span residues 74-160 (DMLV…LSLK), 176-238 (GFIF…CTCV), 261-329 (GSIV…LTLN), 447-511 (GDLV…VSNR), 531-592 (GNVY…LTLP), and 697-771 (QVGD…VSAK). The segment at 1041 to 1145 (KITNGQKKTQ…AKEKAKAEIK (105 aa)) is disordered. Positions 1043–1053 (TNGQKKTQPLT) are enriched in polar residues. Basic and acidic residues-rich tracts occupy residues 1057–1082 (VKEK…KSET) and 1135–1145 (SAKEKAKAEIK). A coiled-coil region spans residues 1119–1157 (LNVAETQKNAAKKKRLSAKEKAKAEIKEEQRLREIEERN). 6 HAT repeats span residues 1161–1193 (KARL…FLLS), 1195–1232 (TEIE…MELV), 1265–1297 (KRKD…AYFW), 1299–1333 (GKSD…LYAK), 1335–1367 (DNND…MLIK), and 1369–1404 (GLID…LEEN).

The protein resides in the nucleus. It localises to the nucleolus. Its function is as follows. Involved in rRNA processing or maturation during ribosome biogenesis. This Drosophila melanogaster (Fruit fly) protein is rRNA biogenesis protein RRP5.